Reading from the N-terminus, the 723-residue chain is MTTSASLERTPSKRDRDRERDNSSGLGSAGSLPASPQSAITVSPSSPATPKRPLRTSTPSLERKREREDREDREDRKERQERHERDRDHERFAAVFSTASTTVPTNTSSSSGLAPEQLRIPTGAAAFSGFPGLHSMSSLMLPSSAAVAAAAAAPFLPWSPILLPPWNHALLPAAFYPAALRNALPGLFDAKVPSSQRSGFHISDILNLEGSELKNAAAAAAAAAHHGSDLSHHSASESTSGHRGQGSHTSPSALSPTPAGVSADEHHNGSGTGGGAGEADHHSTTEHHAPPSHPQQQHPHHQQHHHPHLLLPQQHHQQAVAPLPLAHHQSGEAQSHAHANAAAAHLLASHNAAAAAAVAAGQYLPNLPKNFPGSFGDEMSSYHHMAQTMLQHSGRSAWIKENELYGTQQPASPDSTSPVTSEVSYTYIGSNCQTSPALSGDYKSYSRSADSDALSVGDALHTLHGSSGNGSAGGAPTAHALHNNNNNTTNNNNHSLKAEGINGAGSGHDDSLNEDGIEEDIDDVDDADGSGGGDANGSDGLPNKKRKRRVLFTKAQTYELERRFRQQRYLSAPEREHLASLIRLTPTQVKIWFQNHRYKTKRAQNEKGYEGHPGLLHGHATHPHHPSALPSPRRVAVPVLVRNGKPCLGDSSKLGADCVSVSSATATAMQNAAAHHLVALNGAAAYQHAAAAAAGLHAHAHAHAHAHGHGHPHAHAQRAAWWP.

Disordered regions lie at residues 1–115, 224–307, 465–549, and 703–723; these read MTTS…GLAP, AHHG…HHHP, GSSG…RKRR, and HAHA…AWWP. Residues 10–22 show a composition bias toward basic and acidic residues; that stretch reads TPSKRDRDRERDN. A compositionally biased stretch (low complexity) spans 23 to 36; it reads SSGLGSAGSLPASP. Residues 37-48 are compositionally biased toward polar residues; that stretch reads QSAITVSPSSPA. The span at 61–92 shows a compositional bias: basic and acidic residues; that stretch reads LERKREREDREDREDRKERQERHERDRDHERF. A compositionally biased stretch (low complexity) spans 97–111; sequence STASTTVPTNTSSSS. Positions 226-235 are enriched in basic and acidic residues; sequence HGSDLSHHSA. Residues 237–255 are compositionally biased toward polar residues; that stretch reads ESTSGHRGQGSHTSPSALS. Over residues 278-289 the composition is skewed to basic and acidic residues; sequence EADHHSTTEHHA. Basic residues predominate over residues 298–307; it reads HPHHQQHHHP. Low complexity predominate over residues 483 to 493; that stretch reads NNNNNTTNNNN. A compositionally biased stretch (acidic residues) spans 512-528; sequence LNEDGIEEDIDDVDDAD. The segment at residues 545 to 604 is a DNA-binding region (homeobox); that stretch reads KRKRRVLFTKAQTYELERRFRQQRYLSAPEREHLASLIRLTPTQVKIWFQNHRYKTKRAQ. Positions 703–716 are enriched in basic residues; that stretch reads HAHAHGHGHPHAHA.

Belongs to the NK-2 homeobox family. As to expression, expressed in the CNS and midgut.

The protein resides in the nucleus. Its function is as follows. Probable transcriptional regulator involved in the regulation of the proneural AS-C genes and the neurogenic genes of the enhancer of split complex. Could specifically activate proneural genes in the ventral-most neuroectoderm. This Drosophila melanogaster (Fruit fly) protein is Homeobox protein vnd (vnd).